The chain runs to 999 residues: Probable K(+)/H(+) antiporter subunit A/B (999 aa).

The segment at 1–20 (MTRPASVLAGPKSRPPIHSQ) is disordered. 24 helical membrane-spanning segments follow: residues 31-48 (LLSV…IAIF), 63-85 (AIAL…GGVL), 106-128 (FAWL…ARYY), 138-160 (FFAL…NLIL), 162-181 (AVFW…YWHH), 191-213 (MALT…IGKI), 233-255 (PLYG…QFPF), 270-292 (SAYL…FWPV), 299-321 (WFWI…AIFQ), 336-358 (LGLI…VFHI), 389-411 (GLFH…MAGV), 442-464 (YVAT…GVFF), 488-510 (FLVL…FLHT), 530-552 (GWNI…YFLM), 604-621 (RLLV…LLLG), 636-653 (AFAL…GSAY), 660-682 (LASL…WLSA), 686-708 (AVTQ…RWLP), 729-751 (LRDL…TVMT), 788-807 (TLGE…ALLL), 846-868 (FIPA…FLFL), 878-900 (FAAG…TRWV), 913-935 (SIGL…PFLT), and 955-977 (ILFD…IALA).

In the N-terminal section; belongs to the CPA3 antiporters (TC 2.A.63) subunit A family. This sequence in the C-terminal section; belongs to the CPA3 antiporters (TC 2.A.63) subunit B family. In terms of assembly, may form a heterooligomeric complex that consists of six subunits: PhaAB, PhaC, PhaD, PhaE, PhaF and PhaG.

It localises to the cell membrane. In terms of biological role, part of a K(+) efflux system which is required for the adaptation of R.meliloti to alkaline pH as well as for the infection process during symbiotic nodule development. This chain is Probable K(+)/H(+) antiporter subunit A/B (phaAB), found in Rhizobium meliloti (strain 1021) (Ensifer meliloti).